Consider the following 271-residue polypeptide: Probable ribosome biogenesis GTPase A (271 aa).

The CP-type G domain occupies 21–175 (HDQLKKLASS…LSDTPGVFFK (155 aa)). GTP is bound by residues 127 to 132 (NVGKSS) and G171.

It belongs to the TRAFAC class YlqF/YawG GTPase family. MTG1 subfamily.

Its subcellular location is the cytoplasm. Functionally, required for a late step of 50S ribosomal subunit assembly. Has GTPase activity. Binds to the 23S rRNA. This Mycoplasma pneumoniae (strain ATCC 29342 / M129 / Subtype 1) (Mycoplasmoides pneumoniae) protein is Probable ribosome biogenesis GTPase A (rbgA).